A 443-amino-acid polypeptide reads, in one-letter code: MRIDPFKLAHWMNARKYTAAQTADLAGLPLDDLRRLLGDEANEPDPAAATALAEALSVEPSQLAADAHRNLTVVHKSAEEMHASRRPIQRDGIHFYNYYTLAAPEGRVAPVVLDILCPSDRLPALNNGHLEPAITVNLGPGDINGRWGEEITPQTWRVLHANHGGDRWITGDSYVEPSYCPHSYSLAGDAPARIVSYTAQSNISPLMTEANNWSTGAFEEALKALSGKVSAGSVLDLFLARRAHTRTSAAEAAGVPPADLEAALRSPASETGLTVLRTLGRALGFDYRVLLPADDQHDGVGKTWTTIEDSRRSRRTFGTYEAASMASAAHLPDLVGSFLRVDADGRGADLIDHAENHYVVTEGRLTLEWDGPDGPASVELEPDGSAWTGPFVRHRWHGTGTVLKFGSGAHLGYQDWLELTNTFEPAATLRRGRRDLAGWGYDN.

The 56-residue stretch at 8-63 (LAHWMNARKYTAAQTADLAGLPLDDLRRLLGDEANEPDPAAATALAEALSVEPSQL) folds into the HTH cro/C1-type 1 domain. Substrate is bound at residue lysine 16. A DNA-binding region (H-T-H motif) is located at residues 19-38 (AAQTADLAGLPLDDLRRLLG). Tyrosine 98 and asparagine 126 together coordinate substrate. Residue histidine 129 coordinates Fe cation. Glutamate 176, histidine 182, and serine 196 together coordinate substrate. Residue histidine 182 coordinates Fe cation. Positions 234 to 290 (VLDLFLARRAHTRTSAAEAAGVPPADLEAALRSPASETGLTVLRTLGRALGFDYRVL) constitute an HTH cro/C1-type 2 domain. Residues 245–265 (TRTSAAEAAGVPPADLEAALR) constitute a DNA-binding region (H-T-H motif).

The protein belongs to the non-heme iron-dependent dioxygenase family. In terms of assembly, homodimer. Fe(2+) serves as cofactor.

It catalyses the reaction 2-hydroxyethylphosphonate + O2 = hydroxymethylphosphonate + formate + H(+). It participates in secondary metabolite biosynthesis; bialaphos biosynthesis. Functionally, non-heme-dependent dioxygenase that catalyzes the conversion of 2-hydroxyethylphosphonate (HEP) to hydroxymethylphosphonate (HMP) in the biosynthesis of phosphinothricin tripeptide (PTT), also known as bialaphos (BA), a natural-product antibiotic and potent herbicide. PTT contains the unusual amino acid phosphinothricin attached to 2 alanine residues. Synthetic phosphinothricin (glufosinate) is a key component of commercial herbicides. In Streptomyces viridochromogenes (strain DSM 40736 / JCM 4977 / BCRC 1201 / Tue 494), this protein is 2-hydroxyethylphosphonate dioxygenase (hepD).